Here is a 657-residue protein sequence, read N- to C-terminus: L-glutamate oxidase precursor (657 aa).

The signal sequence occupies residues 1–12 (MTETPRDNSATR). FAD-binding residues include E86, A87, R95, M120, R121, M350, E639, W647, and I648.

Belongs to the flavin monoamine oxidase family. LGOX subfamily. In terms of assembly, the mature enzyme is a heterohexamer composed of 2 alpha chains, 2 beta chains and 2 gamma chains (alpha2beta2gamma2). FAD serves as cofactor. In terms of processing, the precursor form is proteolytically cleaved by an endopeptidase into alpha, beta and gamma chains, which form the stable mature enzyme.

Its subcellular location is the secreted. The catalysed reaction is L-glutamate + O2 + H2O = H2O2 + 2-oxoglutarate + NH4(+). With respect to regulation, proteinase K-treated enzyme exhibits improved affinity for the substrate, increased activity and increased thermostability. Its function is as follows. Catalyzes the oxidative deamination of L-glutamate to 2-ketoglutarate along with the production of ammonia and hydrogen peroxide. Exhibits strict specificity for L-glutamate, and shows only very weak activity with L-glutamine. This Streptomyces diastatochromogenes protein is L-glutamate oxidase precursor.